Here is a 479-residue protein sequence, read N- to C-terminus: 3-isopropylmalate dehydratase large subunit (479 aa).

3 residues coordinate [4Fe-4S] cluster: Cys-350, Cys-415, and Cys-418.

This sequence belongs to the aconitase/IPM isomerase family. LeuC type 1 subfamily. In terms of assembly, heterodimer of LeuC and LeuD. [4Fe-4S] cluster is required as a cofactor.

The catalysed reaction is (2R,3S)-3-isopropylmalate = (2S)-2-isopropylmalate. The protein operates within amino-acid biosynthesis; L-leucine biosynthesis; L-leucine from 3-methyl-2-oxobutanoate: step 2/4. Catalyzes the isomerization between 2-isopropylmalate and 3-isopropylmalate, via the formation of 2-isopropylmaleate. The sequence is that of 3-isopropylmalate dehydratase large subunit from Caulobacter vibrioides (strain ATCC 19089 / CIP 103742 / CB 15) (Caulobacter crescentus).